Consider the following 320-residue polypeptide: Cytochrome f (320 aa).

A signal peptide spans 1–35 (MQNRNFNNLIIKWAIRLISIMIIINTIFWSSISEA). Heme is bound by residues Phe-36, Cys-56, Cys-59, and His-60. Residues 286–305 (IQGLLLFFGSVILAQIFLVL) form a helical membrane-spanning segment.

It belongs to the cytochrome f family. In terms of assembly, the 4 large subunits of the cytochrome b6-f complex are cytochrome b6, subunit IV (17 kDa polypeptide, petD), cytochrome f and the Rieske protein, while the 4 small subunits are PetG, PetL, PetM and PetN. The complex functions as a dimer. The cofactor is heme.

Its subcellular location is the plastid. The protein resides in the chloroplast thylakoid membrane. Functionally, component of the cytochrome b6-f complex, which mediates electron transfer between photosystem II (PSII) and photosystem I (PSI), cyclic electron flow around PSI, and state transitions. In Marchantia polymorpha (Common liverwort), this protein is Cytochrome f (petA).